The chain runs to 188 residues: ATP synthase subunit b (188 aa).

The helical transmembrane segment at 30-50 (IVWSLIPFLIILIVFWKLVLP) threads the bilayer.

This sequence belongs to the ATPase B chain family. In terms of assembly, F-type ATPases have 2 components, F(1) - the catalytic core - and F(0) - the membrane proton channel. F(1) has five subunits: alpha(3), beta(3), gamma(1), delta(1), epsilon(1). F(0) has three main subunits: a(1), b(2) and c(10-14). The alpha and beta chains form an alternating ring which encloses part of the gamma chain. F(1) is attached to F(0) by a central stalk formed by the gamma and epsilon chains, while a peripheral stalk is formed by the delta and b chains.

It is found in the cell membrane. In terms of biological role, f(1)F(0) ATP synthase produces ATP from ADP in the presence of a proton or sodium gradient. F-type ATPases consist of two structural domains, F(1) containing the extramembraneous catalytic core and F(0) containing the membrane proton channel, linked together by a central stalk and a peripheral stalk. During catalysis, ATP synthesis in the catalytic domain of F(1) is coupled via a rotary mechanism of the central stalk subunits to proton translocation. Its function is as follows. Component of the F(0) channel, it forms part of the peripheral stalk, linking F(1) to F(0). The chain is ATP synthase subunit b from Corynebacterium glutamicum (strain R).